The chain runs to 345 residues: KRR1 small subunit processome component homolog (345 aa).

A KH domain is found at 125 to 193; that stretch reads DIIKIGNLVH…VRDIVLETMN (69 aa). A compositionally biased stretch (basic residues) spans 232 to 245; the sequence is NISKRKQPKVKKQK. 2 disordered regions span residues 232 to 260 and 273 to 345; these read NISK…ESKV and QEQK…ARSS. Positions 270 to 298 form a coiled coil; that stretch reads FLNQEQKQAKRNQERTEKQKEAAKRQDER. Basic and acidic residues-rich tracts occupy residues 276–302 and 315–330; these read KQAK…RNKD and RKKE…DVKA. Over residues 331–345 the composition is skewed to basic residues; sequence LKAKLIKANKKARSS.

Belongs to the KRR1 family. Monomer. Component of the ribosomal small subunit (SSU) processome.

Its subcellular location is the nucleus. The protein resides in the nucleolus. Its function is as follows. Required for 40S ribosome biogenesis. Involved in nucleolar processing of pre-18S ribosomal RNA and ribosome assembly. Binds to RNA. Required for female germline development, cell viability during eye development and for survival of dividing cells and epithelial cells during early wing disk development. This is KRR1 small subunit processome component homolog (dbe) from Drosophila melanogaster (Fruit fly).